A 2151-amino-acid chain; its full sequence is RNA-directed RNA polymerase L (2151 aa).

Mn(2+) contacts are provided by His-36, Glu-54, Asp-97, Glu-110, and Val-111. Lys-124 functions as the For endonuclease activity in the catalytic mechanism. A RdRp catalytic domain is found at 956 to 1142 (NGKFIRMKRK…SVNTEMWKSM (187 aa)). Asp-1099 lines the Mg(2+) pocket.

It belongs to the Bunyavirales RNA polymerase family. Interacts with the viral nucleoprotein. Mn(2+) serves as cofactor. Requires Mg(2+) as cofactor.

Its subcellular location is the host cytoplasm. It localises to the host perinuclear region. It carries out the reaction RNA(n) + a ribonucleoside 5'-triphosphate = RNA(n+1) + diphosphate. Its function is as follows. RNA-dependent RNA polymerase, which is responsible for the replication and transcription of the viral RNA genome using antigenomic RNA as an intermediate. During transcription, synthesizes subgenomic RNAs and assures their capping by a cap-snatching mechanism, which involves the endonuclease activity cleaving the host capped pre-mRNAs. These short capped RNAs are then used as primers for viral transcription. Cleaves ssRNA substrates but not DNA. Seems to downregulate the expression of its own and heterologous mRNAs through its endonuclease activity. The protein is RNA-directed RNA polymerase L of Apodemus agrarius (Eurasian field mouse).